Consider the following 618-residue polypeptide: Dihydroxy-acid dehydratase (618 aa).

Aspartate 81 contributes to the Mg(2+) binding site. Cysteine 122 is a [2Fe-2S] cluster binding site. The Mg(2+) site is built by aspartate 123 and lysine 124. Lysine 124 is subject to N6-carboxylysine. Position 195 (cysteine 195) interacts with [2Fe-2S] cluster. Glutamate 491 is a Mg(2+) binding site. Serine 517 functions as the Proton acceptor in the catalytic mechanism.

It belongs to the IlvD/Edd family. In terms of assembly, homodimer. Requires [2Fe-2S] cluster as cofactor. The cofactor is Mg(2+).

The catalysed reaction is (2R)-2,3-dihydroxy-3-methylbutanoate = 3-methyl-2-oxobutanoate + H2O. It catalyses the reaction (2R,3R)-2,3-dihydroxy-3-methylpentanoate = (S)-3-methyl-2-oxopentanoate + H2O. It participates in amino-acid biosynthesis; L-isoleucine biosynthesis; L-isoleucine from 2-oxobutanoate: step 3/4. Its pathway is amino-acid biosynthesis; L-valine biosynthesis; L-valine from pyruvate: step 3/4. Functions in the biosynthesis of branched-chain amino acids. Catalyzes the dehydration of (2R,3R)-2,3-dihydroxy-3-methylpentanoate (2,3-dihydroxy-3-methylvalerate) into 2-oxo-3-methylpentanoate (2-oxo-3-methylvalerate) and of (2R)-2,3-dihydroxy-3-methylbutanoate (2,3-dihydroxyisovalerate) into 2-oxo-3-methylbutanoate (2-oxoisovalerate), the penultimate precursor to L-isoleucine and L-valine, respectively. The polypeptide is Dihydroxy-acid dehydratase (Dechloromonas aromatica (strain RCB)).